The sequence spans 578 residues: Zinc finger protein with KRAB and SCAN domains 8 (578 aa).

A disordered region spans residues 1–20 (MAEESRKPSAPSPPDQTPEE). Ser-12 bears the Phosphoserine mark. Residue Lys-26 forms a Glycyl lysine isopeptide (Lys-Gly) (interchain with G-Cter in SUMO2) linkage. The 83-residue stretch at 51–133 (RLRFRQLCYQ…TLLEDLERQI (83 aa)) folds into the SCAN box domain. Residues 158–205 (ASAPEPPNTQLQSEATQHKSPVPQESQERSMSTSQSPTRSQKGSSGDQ) form a disordered region. The segment covering 165–205 (NTQLQSEATQHKSPVPQESQERSMSTSQSPTRSQKGSSGDQ) has biased composition (polar residues). Residues Lys-176 and Lys-199 each participate in a glycyl lysine isopeptide (Lys-Gly) (interchain with G-Cter in SUMO2) cross-link. At Ser-201 the chain carries Phosphoserine. The KRAB domain occupies 220–316 (EKIEDMAVSL…GRLERQRGNP (97 aa)). Residues Lys-221, Lys-272, and Lys-288 each participate in a glycyl lysine isopeptide (Lys-Gly) (interchain with G-Cter in SUMO2) cross-link. 2 consecutive C2H2-type zinc fingers follow at residues 322–344 (HKCD…WRIH) and 350–372 (YQCN…QDIH). Residues Lys-374 and Lys-376 each participate in a glycyl lysine isopeptide (Lys-Gly) (interchain with G-Cter in SUMO2) cross-link. 7 C2H2-type zinc fingers span residues 378–400 (YHCK…QRIH), 406–428 (YQCN…QRIH), 434–456 (YECN…QRIH), 462–484 (YECD…QRSH), 490–512 (YKCN…QRIH), 518–540 (YKCK…LRIH), and 546–568 (YQCN…QRIH). Glycyl lysine isopeptide (Lys-Gly) (interchain with G-Cter in SUMO2) cross-links involve residues Lys-413 and Lys-441. Lys-502 participates in a covalent cross-link: Glycyl lysine isopeptide (Lys-Gly) (interchain with G-Cter in SUMO2). Lys-572 participates in a covalent cross-link: Glycyl lysine isopeptide (Lys-Gly) (interchain with G-Cter in SUMO2).

The protein belongs to the krueppel C2H2-type zinc-finger protein family.

The protein resides in the nucleus. May be involved in transcriptional regulation. This is Zinc finger protein with KRAB and SCAN domains 8 (ZKSCAN8) from Pan paniscus (Pygmy chimpanzee).